The following is a 426-amino-acid chain: Enolase (426 aa).

Residue Q165 coordinates (2R)-2-phosphoglycerate. E209 serves as the catalytic Proton donor. Mg(2+)-binding residues include D244, E287, and D313. (2R)-2-phosphoglycerate contacts are provided by K338, R367, S368, and K389. Residue K338 is the Proton acceptor of the active site.

The protein belongs to the enolase family. Mg(2+) is required as a cofactor.

Its subcellular location is the cytoplasm. It is found in the secreted. The protein resides in the cell surface. It catalyses the reaction (2R)-2-phosphoglycerate = phosphoenolpyruvate + H2O. It functions in the pathway carbohydrate degradation; glycolysis; pyruvate from D-glyceraldehyde 3-phosphate: step 4/5. Catalyzes the reversible conversion of 2-phosphoglycerate (2-PG) into phosphoenolpyruvate (PEP). It is essential for the degradation of carbohydrates via glycolysis. The sequence is that of Enolase from Methanococcus maripaludis (strain C7 / ATCC BAA-1331).